The chain runs to 214 residues: Ribonuclease HII (214 aa).

One can recognise an RNase H type-2 domain in the interval 26–214 (EIVCGVDEAG…PVREAFDLIR (189 aa)). Positions 32, 33, and 124 each coordinate a divalent metal cation.

The protein belongs to the RNase HII family. It depends on Mn(2+) as a cofactor. Requires Mg(2+) as cofactor.

The protein resides in the cytoplasm. It carries out the reaction Endonucleolytic cleavage to 5'-phosphomonoester.. Its function is as follows. Endonuclease that specifically degrades the RNA of RNA-DNA hybrids. The polypeptide is Ribonuclease HII (Burkholderia thailandensis (strain ATCC 700388 / DSM 13276 / CCUG 48851 / CIP 106301 / E264)).